The primary structure comprises 234 residues: Small ribosomal subunit protein uS3 (234 aa).

The 69-residue stretch at 39-107 folds into the KH type-2 domain; the sequence is IRKFLKKELY…EVSINIKEVK (69 aa).

It belongs to the universal ribosomal protein uS3 family. As to quaternary structure, part of the 30S ribosomal subunit. Forms a tight complex with proteins S10 and S14.

In terms of biological role, binds the lower part of the 30S subunit head. Binds mRNA in the 70S ribosome, positioning it for translation. This is Small ribosomal subunit protein uS3 from Helicobacter pylori (strain G27).